A 241-amino-acid chain; its full sequence is Outer membrane protein assembly factor BamD (241 aa).

The first 17 residues, 1-17 (MKYQTLSGLLALSLLFG), serve as a signal peptide directing secretion. A lipid anchor (N-palmitoyl cysteine) is attached at Cys-18. Cys-18 carries the S-diacylglycerol cysteine lipid modification.

This sequence belongs to the BamD family. Part of the Bam complex.

The protein localises to the cell outer membrane. Functionally, part of the outer membrane protein assembly complex, which is involved in assembly and insertion of beta-barrel proteins into the outer membrane. The sequence is that of Outer membrane protein assembly factor BamD from Vibrio cholerae serotype O1 (strain ATCC 39315 / El Tor Inaba N16961).